The chain runs to 148 residues: Lipoprotein MlpA (148 aa).

The N-terminal stretch at 1-17 (MKIINILFCLFLLLLNS) is a signal peptide. A lipid anchor (N-palmitoyl cysteine) is attached at Cys-18. Cys-18 is lipidated: S-diacylglycerol cysteine. The disordered stretch occupies residues 26-58 (LKNNAQQTKSRGKRDLTQKEATPEKPKSKEELL). The segment covering 38–58 (KRDLTQKEATPEKPKSKEELL) has biased composition (basic and acidic residues).

Belongs to the Multicopy lipoprotein (Mlp) family.

The protein localises to the cell outer membrane. An outer membrane protein that may participate in pathogenesis. Some human Lyme disease patients have antibodies against this protein. The Mlp proteins probably undergo intragenic recombination, generating new alleles. The polypeptide is Lipoprotein MlpA (mlpA) (Borreliella burgdorferi (strain ATCC 35210 / DSM 4680 / CIP 102532 / B31) (Borrelia burgdorferi)).